The chain runs to 103 residues: ATP synthase subunit f, mitochondrial (103 aa).

The transit peptide at 1–6 (MIFRRQ) directs the protein to the mitochondrion.

In terms of assembly, F-type ATP synthases have 2 components, the catalytic core F(1) and the membrane-embedded component F(0), linked together by a central stalk and a peripheral stalk. The central stalk, also called rotor shaft, is often seen as part of F(1). The peripheral stalk is seen as part of F(0). F(0) contains the membrane channel next to the rotor. F-type ATP synthases form dimers but each monomer functions independently in ATP generation. The dimer consists of 17 different polypeptides: ATP1 (subunit alpha, 3 molecules per monomer, part of F(1)), ATP2 (subunit beta, 3 copies per monomer, part of F(1)), ATP3 (subunit gamma, part of the central stalk), ATP4 (subunit b, part of the peripheral stalk), ATP5/OSCP (subunit 5/OSCP, part of the peripheral stalk), ATP6 (subunit a, part of the peripheral stalk), ATP7 (subunit d, part of the peripheral stalk), ATP8 (subunit 8, part of the peripheral stalk), OLI1 (subunit c, part of the rotor, 10 molecules per monomer), ATP14 (subunit h, part of the peripheral stalk), ATP15 (subunit epsilon, part of the central stalk), ATP16 (subunit delta, part of the central stalk), ATP17 (subunit f, part of the peripheral stalk), ATP18 (subunit i/j, part of the peripheral stalk), ATP19 (subunit k, dimer-specific, at interface between monomers), ATP20 (subunit g, at interface between monomers), TIM11 (subunit e, at interface between monomers).

It localises to the mitochondrion inner membrane. In terms of biological role, mitochondrial membrane ATP synthase (F(1)F(0) ATP synthase or Complex V) produces ATP from ADP in the presence of a proton gradient across the membrane which is generated by electron transport complexes of the respiratory chain. F-type ATP synthases consist of two structural domains, F(1) - containing the extramembraneous catalytic core, and F(0) - containing the membrane proton channel, linked together by a central stalk and a peripheral stalk. During catalysis, ATP synthesis in the catalytic domain of F(1) is coupled via a rotary mechanism of the central stalk subunits to proton translocation. Part of the complex F(0) domain. Minor subunit located with subunit a/ATP6 in the membrane. The sequence is that of ATP synthase subunit f, mitochondrial from Yarrowia lipolytica (strain CLIB 122 / E 150) (Yeast).